The following is a 451-amino-acid chain: Mannan endo-1,6-alpha-mannosidase DCW1 (451 aa).

Positions 1 to 21 (MLAVTFTAAAVLSLLAASGRT) are cleaved as a signal peptide. Asn84, Asn109, Asn203, Asn242, Asn267, and Asn291 each carry an N-linked (GlcNAc...) asparagine glycan. The interval 397-419 (AMNGGTSPGDPAAGTKTKAENLP) is disordered. Asp427 carries GPI-anchor amidated aspartate lipidation. The propeptide at 428 to 451 (RAGAGIITALIGSSFLACTLWLII) is removed in mature form.

The protein belongs to the glycosyl hydrolase 76 family.

The protein localises to the secreted. It is found in the cell wall. It localises to the cell membrane. The enzyme catalyses Random hydrolysis of (1-&gt;6)-alpha-D-mannosidic linkages in unbranched (1-&gt;6)-mannans.. Functionally, required for normal synthesis of the cell wall. This chain is Mannan endo-1,6-alpha-mannosidase DCW1 (DCW1), found in Eremothecium gossypii (strain ATCC 10895 / CBS 109.51 / FGSC 9923 / NRRL Y-1056) (Yeast).